The primary structure comprises 373 residues: 3 beta-hydroxysteroid dehydrogenase/Delta 5--&gt;4-isomerase (373 aa).

Tyr-155 functions as the Proton acceptor in the catalytic mechanism. Lys-159 provides a ligand contact to NAD(+). The helical transmembrane segment at Ile-288–Ile-308 threads the bilayer.

It belongs to the 3-beta-HSD family.

Its subcellular location is the endoplasmic reticulum membrane. The protein localises to the mitochondrion membrane. The catalysed reaction is a 3beta-hydroxy-Delta(5)-steroid + NAD(+) = a 3-oxo-Delta(5)-steroid + NADH + H(+). The enzyme catalyses a 3-oxo-Delta(5)-steroid = a 3-oxo-Delta(4)-steroid. The protein operates within lipid metabolism; steroid biosynthesis. Its function is as follows. 3-beta-HSD is a bifunctional enzyme, that catalyzes the oxidative conversion of Delta(5)-ene-3-beta-hydroxy steroid, and the oxidative conversion of ketosteroids. The 3-beta-HSD enzymatic system plays a crucial role in the biosynthesis of all classes of hormonal steroids. The protein is 3 beta-hydroxysteroid dehydrogenase/Delta 5--&gt;4-isomerase (HSD3B) of Bos taurus (Bovine).